Consider the following 435-residue polypeptide: NADH-quinone oxidoreductase subunit D (435 aa).

The protein belongs to the complex I 49 kDa subunit family. As to quaternary structure, NDH-1 is composed of 14 different subunits. Subunits NuoB, C, D, E, F, and G constitute the peripheral sector of the complex.

The protein resides in the cell inner membrane. It carries out the reaction a quinone + NADH + 5 H(+)(in) = a quinol + NAD(+) + 4 H(+)(out). Functionally, NDH-1 shuttles electrons from NADH, via FMN and iron-sulfur (Fe-S) centers, to quinones in the respiratory chain. The immediate electron acceptor for the enzyme in this species is believed to be ubiquinone. Couples the redox reaction to proton translocation (for every two electrons transferred, four hydrogen ions are translocated across the cytoplasmic membrane), and thus conserves the redox energy in a proton gradient. This chain is NADH-quinone oxidoreductase subunit D, found in Xylella fastidiosa (strain M23).